Consider the following 286-residue polypeptide: Polygalacturonan/rhamnogalacturonan transport system permease protein YtcP (286 aa).

The next 6 helical transmembrane spans lie at 9-29, 69-89, 106-126, 131-151, 176-196, and 251-271; these read LIYG…IHVI, LLVS…LSSL, MFLV…FLVV, LLDS…NLII, GIFF…ISLF, and TIKM…YPFI. An ABC transmembrane type-1 domain is found at 69 to 271; that stretch reads LLVSVFVTVI…IPVLLVYPFI (203 aa).

This sequence belongs to the binding-protein-dependent transport system permease family. CysTW subfamily. The complex is probably composed of two ATP-binding proteins (MsmX), two transmembrane proteins (YtcP and YteP) and a solute-binding protein (YtcQ).

Its subcellular location is the cell membrane. In terms of biological role, involved in pectin degradation. Part of the ABC transporter complex YtcQP-YteP involved in the uptake of polygalacturonan and rhamnogalacturonan type I. Responsible for the translocation of the substrate across the membrane. This chain is Polygalacturonan/rhamnogalacturonan transport system permease protein YtcP (ytcP), found in Bacillus subtilis (strain 168).